Consider the following 254-residue polypeptide: Peroxisomal membrane protein 11-2 (254 aa).

Over 1–113 the chain is Cytoplasmic; the sequence is MVTAAGSPSS…YHPHPHVHPL (113 aa). The helical transmembrane segment at 114–134 threads the bilayer; that stretch reads LVLLAYGGQGVYNFLEQFAWL. Topologically, residues 135–227 are lumenal; it reads AKAGLLPARL…TVGDVTGRKG (93 aa). A helical membrane pass occupies residues 228–247; it reads LLGSSTLMASAGLLSALISV. Residues 248–254 lie on the Cytoplasmic side of the membrane; the sequence is HKNWNSC.

It belongs to the peroxin-11 family.

It is found in the peroxisome membrane. In terms of biological role, involved in peroxisomal proliferation. In Oryza sativa subsp. japonica (Rice), this protein is Peroxisomal membrane protein 11-2 (PEX11-2).